The primary structure comprises 248 residues: MKKDREPIDEDEMRITSTGRMTNYVNYGAKILGDEDKKSIKIKATGNAIGKAVTLAEIIKRRFKGLHQITRCGSTVITDQYVSGQDNSEHVVQEKTVSFIEILLSREQLDMKDAGYQPPLDEKYVKEMTPEEIVNSRPFRRGGFRPRFYRGFRGGRGGFLRRGGYRGFGDRVYEPRSSFRGGRGSGYGGNFGRGGYRSGGGMGGGFRGGFRGGFRGGRDGGYRGGNRGGSRSGFRGGRGGFRGGRALS.

Positions 217 to 248 (GRDGGYRGGNRGGSRSGFRGGRGGFRGGRALS) are disordered. A compositionally biased stretch (gly residues) spans 222–248 (YRGGNRGGSRSGFRGGRGGFRGGRALS).

Belongs to the histone-like Alba family. As to quaternary structure, may form homodimers. Identified in a TARE6-associated complex consisting of over 30 proteins and including ALBA1, ALBA2 and ALBA4; the complex binds to the non-coding subtelomeric repeat region TARE6.

Its subcellular location is the nucleus. It is found in the chromosome. The protein localises to the telomere. It localises to the cytoplasm. In terms of biological role, possesses DNA- and RNA-binding activities. During the asexual blood stages binds to a sub-population of mature mRNAs and regulates the timing of their translation. Binds to DNA with relaxed sequence specificity. Associates with the subtelomeric TARE6 repeats. The sequence is that of DNA/RNA-binding protein ALBA1 from Plasmodium falciparum (isolate 3D7).